The primary structure comprises 139 residues: Transcription antitermination protein NusB (139 aa).

It belongs to the NusB family.

In terms of biological role, involved in transcription antitermination. Required for transcription of ribosomal RNA (rRNA) genes. Binds specifically to the boxA antiterminator sequence of the ribosomal RNA (rrn) operons. This Enterobacter sp. (strain 638) protein is Transcription antitermination protein NusB.